A 296-amino-acid polypeptide reads, in one-letter code: Ribosomal protein L11 methyltransferase (296 aa).

The S-adenosyl-L-methionine site is built by Thr151, Gly172, Asp194, and Asn233.

The protein belongs to the methyltransferase superfamily. PrmA family.

It localises to the cytoplasm. It carries out the reaction L-lysyl-[protein] + 3 S-adenosyl-L-methionine = N(6),N(6),N(6)-trimethyl-L-lysyl-[protein] + 3 S-adenosyl-L-homocysteine + 3 H(+). Methylates ribosomal protein L11. The polypeptide is Ribosomal protein L11 methyltransferase (Dechloromonas aromatica (strain RCB)).